The primary structure comprises 403 residues: Coiled-coil domain-containing glutamate-rich protein 1 (403 aa).

Positions 1–11 (MTQTVNEREDP) are enriched in basic and acidic residues. 5 disordered regions span residues 1-23 (MTQTVNEREDPLNLGGGGWASSI), 51-70 (IEYEASRKQPKQQRSPGSWF), 134-164 (RPPGRKKRWGRRGRGLRRHPRRSFPRNPPID), 202-241 (QQEKLERQQAALRAQQAQEGGISPGDSTTNDAPHSGVEED), and 261-350 (PALM…GEQR). Positions 137–157 (GRKKRWGRRGRGLRRHPRRSF) are enriched in basic residues. A compositionally biased stretch (low complexity) spans 209–220 (QQAALRAQQAQE). Positions 261–271 (PALMQHNQSPT) are enriched in polar residues. The span at 275–346 (VEEEEKNVDD…YMLEETGLEE (72 aa)) shows a compositional bias: acidic residues. The stretch at 292–353 (CDEKEESEEE…LEEGEQRAEE (62 aa)) forms a coiled coil.

Expressed in testis.

The protein resides in the nucleus. Its function is as follows. Regulator of histone epigenetic modifications and chromatin compaction into the sperm head, required for histone-to-protamine (HTP) transition. HTP is a key event in which somatic histones are first replaced by testis-specific histone variants, then transition proteins (TNPs) are incorporated into the spermatid nucleus, and finally protamines (PRMs) replace the TNPs to promote chromatin condensation. This Mus musculus (Mouse) protein is Coiled-coil domain-containing glutamate-rich protein 1 (Ccer1).